Reading from the N-terminus, the 346-residue chain is Dihydroorotate dehydrogenase (quinone) (346 aa).

FMN-binding positions include 61–65 and Thr85; that span reads AGLDK. Lys65 contacts substrate. 110-114 is a substrate binding site; that stretch reads NRMGF. FMN contacts are provided by Asn138 and Asn171. Asn171 is a binding site for substrate. Ser174 acts as the Nucleophile in catalysis. Position 176 (Asn176) interacts with substrate. 2 residues coordinate FMN: Lys216 and Thr244. Residue 245–246 participates in substrate binding; sequence NT. FMN-binding positions include Gly267, Gly296, and 317–318; that span reads YS.

It belongs to the dihydroorotate dehydrogenase family. Type 2 subfamily. In terms of assembly, monomer. FMN serves as cofactor.

The protein resides in the cell membrane. The catalysed reaction is (S)-dihydroorotate + a quinone = orotate + a quinol. The protein operates within pyrimidine metabolism; UMP biosynthesis via de novo pathway; orotate from (S)-dihydroorotate (quinone route): step 1/1. Functionally, catalyzes the conversion of dihydroorotate to orotate with quinone as electron acceptor. This chain is Dihydroorotate dehydrogenase (quinone), found in Marinomonas sp. (strain MWYL1).